The sequence spans 130 residues: YopE regulator (130 aa).

Positive regulator of YopE. This is YopE regulator (yerA) from Yersinia enterocolitica serotype O:8 / biotype 1B (strain NCTC 13174 / 8081).